The following is a 38-amino-acid chain: Histatin-1 (38 aa).

Residues 1-38 (DSHEERHHGRHGHHKYGRKFHEKHHSHRGYRSNYLYDN) are disordered. Ser-2 bears the Phosphoserine mark. The span at 8-30 (HGRHGHHKYGRKFHEKHHSHRGY) shows a compositional bias: basic residues.

Belongs to the histatin/statherin family.

Its subcellular location is the secreted. In terms of biological role, histatins (Hsts) are cationic and histidine-rich secreted peptides mainly synthesized by saliva glands of humans and higher primates. Hsts are considered to be major precursors of the protective proteinaceous structure on tooth surfaces (enamel pellicle). This chain is Histatin-1 (HTN1), found in Macaca fascicularis (Crab-eating macaque).